The chain runs to 434 residues: Gamma-enolase (434 aa).

Ser-2 is modified (N-acetylserine). Lys-5 is subject to N6-acetyllysine. Thr-26 is modified (phosphothreonine). Residue Ser-40 coordinates Mg(2+). At Tyr-44 the chain carries Phosphotyrosine. Lys-60 carries the N6-acetyllysine; alternate modification. Lys-60 carries the N6-succinyllysine; alternate modification. At Lys-64 the chain carries N6-acetyllysine. Lys-89 is subject to N6-acetyllysine; alternate. Residue Lys-89 is modified to N6-succinyllysine; alternate. Positions 158 and 167 each coordinate substrate. Lys-193, Lys-197, and Lys-199 each carry N6-acetyllysine. An N6-acetyllysine; alternate modification is found at Lys-202. Lys-202 is covalently cross-linked (Glycyl lysine isopeptide (Lys-Gly) (interchain with G-Cter in SUMO2); alternate). Catalysis depends on Glu-210, which acts as the Proton donor. Lys-228 and Lys-233 each carry N6-acetyllysine; alternate. Lys-228 carries the post-translational modification N6-succinyllysine; alternate. Lys-233 is modified (N6-(2-hydroxyisobutyryl)lysine; alternate). Asp-245 contacts Mg(2+). N6-acetyllysine is present on Lys-256. A Phosphoserine modification is found at Ser-263. Tyr-287 is modified (phosphotyrosine). Ser-291 bears the Phosphoserine mark. The Mg(2+) site is built by Glu-293 and Asp-318. Substrate contacts are provided by Glu-293 and Asp-318. 2 positions are modified to N6-acetyllysine: Lys-335 and Lys-343. Catalysis depends on Lys-343, which acts as the Proton acceptor. Substrate-binding positions include 370 to 373 and Lys-394; that span reads SHRS. Lys-406 carries the post-translational modification N6-acetyllysine.

This sequence belongs to the enolase family. As to quaternary structure, mammalian enolase is composed of 3 isozyme subunits, alpha, beta and gamma, which can form homodimers or heterodimers which are cell-type and development-specific. Requires Mg(2+) as cofactor. As to expression, the alpha/alpha homodimer is expressed in embryo and in most adult tissues. The alpha/beta heterodimer and the beta/beta homodimer are found in striated muscle, and the alpha/gamma heterodimer and the gamma/gamma homodimer in neurons.

Its subcellular location is the cytoplasm. It localises to the cell membrane. The enzyme catalyses (2R)-2-phosphoglycerate = phosphoenolpyruvate + H2O. The protein operates within carbohydrate degradation; glycolysis; pyruvate from D-glyceraldehyde 3-phosphate: step 4/5. In terms of biological role, has neurotrophic and neuroprotective properties on a broad spectrum of central nervous system (CNS) neurons. Binds, in a calcium-dependent manner, to cultured neocortical neurons and promotes cell survival. This is Gamma-enolase (ENO2) from Homo sapiens (Human).